A 221-amino-acid chain; its full sequence is Histone H1.3 (221 aa).

Low complexity predominate over residues 1–17; it reads MSETAPAAPAAPAPVEK. The segment at 1–42 is disordered; that stretch reads MSETAPAAPAAPAPVEKTPVKKKAKKTGAAAGKRKASGPPVS. Residue S2 is modified to N-acetylserine. Position 2 is a phosphoserine (S2). The residue at position 17 (K17) is an N6-acetyllysine. A Phosphothreonine modification is found at T18. Basic residues predominate over residues 20–36; that stretch reads VKKKAKKTGAAAGKRKA. An N6-(beta-hydroxybutyryl)lysine mark is found at K33, K35, and K53. Positions 37-110 constitute an H15 domain; that stretch reads SGPPVSELIT…GASGSFKLNK (74 aa). R55 bears the Citrulline mark. K65, K86, and K91 each carry N6-(beta-hydroxybutyryl)lysine. Positions 92 to 221 are disordered; sequence GTLVQTKGTG…KAKKAAPRKK (130 aa). S105 carries the post-translational modification Phosphoserine; by PKC. Residues K107 and K141 each carry the N6-(beta-hydroxybutyryl)lysine modification. Basic residues-rich tracts occupy residues 120-141, 150-161, 170-187, and 194-221; these read KAKKAGAAKAKKPAGAAKKPKK, KTAKKTPKKAKK, KVSKSPKKVKAAKPKKAA, and KAPKAKASKPKASKPKATKAKKAAPRKK.

It belongs to the histone H1/H5 family. Post-translationally, H1 histones are progressively phosphorylated during the cell cycle, becoming maximally phosphorylated during late G2 phase and M phase, and being dephosphorylated sharply thereafter. Hydroxybutyrylation of histones is induced by starvation. In terms of processing, citrullination at Arg-55 (H1R54ci) by PADI4 takes place within the DNA-binding site of H1 and results in its displacement from chromatin and global chromatin decondensation, thereby promoting pluripotency and stem cell maintenance.

The protein resides in the nucleus. It is found in the chromosome. Functionally, histone H1 protein binds to linker DNA between nucleosomes forming the macromolecular structure known as the chromatin fiber. Histones H1 are necessary for the condensation of nucleosome chains into higher-order structured fibers. Also acts as a regulator of individual gene transcription through chromatin remodeling, nucleosome spacing and DNA methylation. The protein is Histone H1.3 of Mus musculus (Mouse).